The following is a 175-amino-acid chain: Alkyl hydroperoxide reductase AhpD (175 aa).

Catalysis depends on C130, which acts as the Proton donor. The cysteines at positions 130 and 133 are disulfide-linked. C133 (cysteine sulfenic acid (-SOH) intermediate) is an active-site residue.

Belongs to the AhpD family. As to quaternary structure, homotrimer.

It catalyses the reaction N(6)-[(R)-dihydrolipoyl]-L-lysyl-[lipoyl-carrier protein] + a hydroperoxide = N(6)-[(R)-lipoyl]-L-lysyl-[lipoyl-carrier protein] + an alcohol + H2O. Functionally, antioxidant protein with alkyl hydroperoxidase activity. Required for the reduction of the AhpC active site cysteine residues and for the regeneration of the AhpC enzyme activity. This Mycobacteroides abscessus (strain ATCC 19977 / DSM 44196 / CCUG 20993 / CIP 104536 / JCM 13569 / NCTC 13031 / TMC 1543 / L948) (Mycobacterium abscessus) protein is Alkyl hydroperoxide reductase AhpD.